The chain runs to 327 residues: Aspartate--ammonia ligase (327 aa).

The protein belongs to the class-II aminoacyl-tRNA synthetase family. AsnA subfamily.

The protein localises to the cytoplasm. The catalysed reaction is L-aspartate + NH4(+) + ATP = L-asparagine + AMP + diphosphate + H(+). Its pathway is amino-acid biosynthesis; L-asparagine biosynthesis; L-asparagine from L-aspartate (ammonia route): step 1/1. The chain is Aspartate--ammonia ligase from Bacillus cereus (strain B4264).